A 98-amino-acid polypeptide reads, in one-letter code: Protein PROLINE CONTENT ALTERNATIVE 22 (98 aa).

In terms of tissue distribution, mainly expressed in flowers, to a lower extent, in roots and, at very low levels, in leaves and stems.

It is found in the cytoplasm. Functionally, acts as an opponent to RZF1 during early seedling growth in term of proline accumulation in response to dehydration and abscisic acid (ABA). Confers sensitivity to abiotic stresses such as ABA, drought and osmotic stress (e.g. mannitol treatment) by preventing proline accumulation and by reducing the expression of dehydration-inducible genes. Promotes the production of lipid peroxidation by drought stress thus leading to malondialdehyde (MDA) synthesis. Prevents pollen tube elongation. Necessary for RZF1 expression in seedlings. In Arabidopsis thaliana (Mouse-ear cress), this protein is Protein PROLINE CONTENT ALTERNATIVE 22.